The primary structure comprises 289 residues: ATP synthase gamma chain (289 aa).

This sequence belongs to the ATPase gamma chain family. F-type ATPases have 2 components, CF(1) - the catalytic core - and CF(0) - the membrane proton channel. CF(1) has five subunits: alpha(3), beta(3), gamma(1), delta(1), epsilon(1). CF(0) has three main subunits: a, b and c.

The protein localises to the cell inner membrane. In terms of biological role, produces ATP from ADP in the presence of a proton gradient across the membrane. The gamma chain is believed to be important in regulating ATPase activity and the flow of protons through the CF(0) complex. The polypeptide is ATP synthase gamma chain (Polynucleobacter necessarius subsp. necessarius (strain STIR1)).